The primary structure comprises 123 residues: WAP four-disulfide core domain protein 5 (123 aa).

An N-terminal signal peptide occupies residues 1–24 (MRTQSLLLLGALLAVGSQLPAVFG). WAP domains follow at residues 27–73 (KGEK…CVPR) and 74–121 (VSVK…RDPA). Disulfide bonds link C34–C62, C41–C66, C49–C61, C55–C70, C81–C109, C88–C113, C96–C108, and C102–C117.

Its subcellular location is the secreted. Functionally, putative acid-stable proteinase inhibitor. The sequence is that of WAP four-disulfide core domain protein 5 (WFDC5) from Pan troglodytes (Chimpanzee).